The following is a 201-amino-acid chain: Lipopolysaccharide core heptose(II)-phosphate phosphatase (201 aa).

Residues 1–35 (MLAFILRFIKNKSYFALLAGAWVIIAGLTSQHAWS) form the signal peptide.

Belongs to the phosphoglycerate mutase family. Ais subfamily.

Its subcellular location is the periplasm. Its pathway is bacterial outer membrane biogenesis; lipopolysaccharide metabolism. Catalyzes the dephosphorylation of heptose(II) of the outer membrane lipopolysaccharide core. This Salmonella arizonae (strain ATCC BAA-731 / CDC346-86 / RSK2980) protein is Lipopolysaccharide core heptose(II)-phosphate phosphatase.